Consider the following 270-residue polypeptide: UPF0354 protein BA_4944/GBAA_4944/BAS4588 (270 aa).

Belongs to the UPF0354 family.

The sequence is that of UPF0354 protein BA_4944/GBAA_4944/BAS4588 from Bacillus anthracis.